A 203-amino-acid polypeptide reads, in one-letter code: NADH-ubiquinone oxidoreductase chain 6 (203 aa).

5 helical membrane passes run 16–36 (SNILDILAFISIILGIYTIVS), 40–60 (VVSVLFLIGLFSTISIYLIMI), 70–90 (LLVYIGAVSILFLFILMLINI), 102–122 (YIPLAILSMITLVYILGQKII), and 179–199 (WLIIISLILLLAMVGSIVISI).

Belongs to the complex I subunit 6 family.

The protein resides in the mitochondrion membrane. It catalyses the reaction a ubiquinone + NADH + 5 H(+)(in) = a ubiquinol + NAD(+) + 4 H(+)(out). Functionally, core subunit of the mitochondrial membrane respiratory chain NADH dehydrogenase (Complex I) that is believed to belong to the minimal assembly required for catalysis. Complex I functions in the transfer of electrons from NADH to the respiratory chain. The immediate electron acceptor for the enzyme is believed to be ubiquinone. The protein is NADH-ubiquinone oxidoreductase chain 6 (ND6) of Trichophyton rubrum (Athlete's foot fungus).